The sequence spans 478 residues: Adenosylhomocysteinase (478 aa).

The substrate site is built by Thr67, Asp144, and Glu204. Residue 205–207 (TTT) participates in NAD(+) binding. Substrate-binding residues include Lys234 and Asp238. Residues Asn239, 268–273 (GYGDVG), Glu291, Asn326, 347–349 (IGH), and Asn392 contribute to the NAD(+) site.

Belongs to the adenosylhomocysteinase family. The cofactor is NAD(+).

Its subcellular location is the cytoplasm. The enzyme catalyses S-adenosyl-L-homocysteine + H2O = L-homocysteine + adenosine. The protein operates within amino-acid biosynthesis; L-homocysteine biosynthesis; L-homocysteine from S-adenosyl-L-homocysteine: step 1/1. In terms of biological role, may play a key role in the regulation of the intracellular concentration of adenosylhomocysteine. The chain is Adenosylhomocysteinase from Nitrosomonas europaea (strain ATCC 19718 / CIP 103999 / KCTC 2705 / NBRC 14298).